The following is a 429-amino-acid chain: SVP1-like protein 2 (429 aa).

4 WD repeats span residues 10–48 (PVLA…LRTS), 50–96 (DFGA…QVGV), 178–218 (AHTS…RLYE), and 223–262 (IDKA…GTRP). The tract at residues 262 to 297 (PITSNGGTAYAAGEPSVTGNNRPSSPYSVASSSGGG) is disordered.

The protein belongs to the WD repeat PROPPIN family.

The protein resides in the vacuole membrane. The protein localises to the cytoplasmic vesicle membrane. In terms of biological role, involved in mitochondrial or peroxisomal functions and amino acid signaling pathways. The polypeptide is SVP1-like protein 2 (apg-14) (Neurospora crassa (strain ATCC 24698 / 74-OR23-1A / CBS 708.71 / DSM 1257 / FGSC 987)).